A 274-amino-acid polypeptide reads, in one-letter code: Aliphatic sulfonates import ATP-binding protein SsuB 2 (274 aa).

One can recognise an ABC transporter domain in the interval 21–242 (LALRGVARRF…SRGSARLAAL (222 aa)). Position 53 to 60 (53 to 60 (GRSGCGKS)) interacts with ATP.

The protein belongs to the ABC transporter superfamily. Aliphatic sulfonates importer (TC 3.A.1.17.2) family. As to quaternary structure, the complex is composed of two ATP-binding proteins (SsuB), two transmembrane proteins (SsuC) and a solute-binding protein (SsuA).

It is found in the cell inner membrane. It carries out the reaction ATP + H2O + aliphatic sulfonate-[sulfonate-binding protein]Side 1 = ADP + phosphate + aliphatic sulfonateSide 2 + [sulfonate-binding protein]Side 1.. Part of the ABC transporter complex SsuABC involved in aliphatic sulfonates import. Responsible for energy coupling to the transport system. The polypeptide is Aliphatic sulfonates import ATP-binding protein SsuB 2 (Pseudomonas aeruginosa (strain UCBPP-PA14)).